The primary structure comprises 429 residues: Enolase (429 aa).

Gln162 provides a ligand contact to (2R)-2-phosphoglycerate. Glu204 serves as the catalytic Proton donor. The Mg(2+) site is built by Asp241, Glu288, and Asp315. Lys340, Arg369, Ser370, and Lys391 together coordinate (2R)-2-phosphoglycerate. Lys340 (proton acceptor) is an active-site residue.

The protein belongs to the enolase family. Mg(2+) is required as a cofactor.

It is found in the cytoplasm. The protein resides in the secreted. Its subcellular location is the cell surface. The enzyme catalyses (2R)-2-phosphoglycerate = phosphoenolpyruvate + H2O. It participates in carbohydrate degradation; glycolysis; pyruvate from D-glyceraldehyde 3-phosphate: step 4/5. Its function is as follows. Catalyzes the reversible conversion of 2-phosphoglycerate (2-PG) into phosphoenolpyruvate (PEP). It is essential for the degradation of carbohydrates via glycolysis. This Bacteroides fragilis (strain ATCC 25285 / DSM 2151 / CCUG 4856 / JCM 11019 / LMG 10263 / NCTC 9343 / Onslow / VPI 2553 / EN-2) protein is Enolase.